The sequence spans 162 residues: 6,7-dimethyl-8-ribityllumazine synthase (162 aa).

5-amino-6-(D-ribitylamino)uracil is bound by residues Phe22, 56-58, and 80-82; these read TFE and AVI. 85–86 lines the (2S)-2-hydroxy-3-oxobutyl phosphate pocket; it reads GT. The active-site Proton donor is the His88. 5-amino-6-(D-ribitylamino)uracil is bound at residue Met113. (2S)-2-hydroxy-3-oxobutyl phosphate is bound at residue Arg127.

Belongs to the DMRL synthase family.

It carries out the reaction (2S)-2-hydroxy-3-oxobutyl phosphate + 5-amino-6-(D-ribitylamino)uracil = 6,7-dimethyl-8-(1-D-ribityl)lumazine + phosphate + 2 H2O + H(+). It participates in cofactor biosynthesis; riboflavin biosynthesis; riboflavin from 2-hydroxy-3-oxobutyl phosphate and 5-amino-6-(D-ribitylamino)uracil: step 1/2. Its function is as follows. Catalyzes the formation of 6,7-dimethyl-8-ribityllumazine by condensation of 5-amino-6-(D-ribitylamino)uracil with 3,4-dihydroxy-2-butanone 4-phosphate. This is the penultimate step in the biosynthesis of riboflavin. This chain is 6,7-dimethyl-8-ribityllumazine synthase, found in Anaeromyxobacter dehalogenans (strain 2CP-1 / ATCC BAA-258).